Reading from the N-terminus, the 413-residue chain is Putative competence-damage inducible protein (413 aa).

This sequence belongs to the CinA family.

The chain is Putative competence-damage inducible protein from Pediococcus pentosaceus (strain ATCC 25745 / CCUG 21536 / LMG 10740 / 183-1w).